The chain runs to 454 residues: UDP-N-acetylmuramate--L-alanine ligase (454 aa).

112-118 (GTHGKTT) is a binding site for ATP.

This sequence belongs to the MurCDEF family.

It is found in the cytoplasm. It carries out the reaction UDP-N-acetyl-alpha-D-muramate + L-alanine + ATP = UDP-N-acetyl-alpha-D-muramoyl-L-alanine + ADP + phosphate + H(+). The protein operates within cell wall biogenesis; peptidoglycan biosynthesis. In terms of biological role, cell wall formation. This is UDP-N-acetylmuramate--L-alanine ligase from Nitratidesulfovibrio vulgaris (strain ATCC 29579 / DSM 644 / CCUG 34227 / NCIMB 8303 / VKM B-1760 / Hildenborough) (Desulfovibrio vulgaris).